The following is a 560-amino-acid chain: Putative transport protein VSAL_I2029 (560 aa).

5 helical membrane-spanning segments follow: residues 14–34, 37–57, 66–86, 94–114, and 161–181; these read ILLL…KIGS, LGSS…GYTF, FMLF…GIFL, LLVL…GYYF, and NLSV…ILLA. RCK C-terminal domains lie at 203 to 292 and 293 to 376; these read RGIG…FRNG and KEVF…KIGF. 5 helical membrane passes run 386–406, 409–429, 451–471, 478–498, and 539–559; these read LLAF…TMSF, VTFG…LGFL, GLLV…IEYF, VLAA…LVGA, and AGTY…MILL.

This sequence belongs to the AAE transporter (TC 2.A.81) family. YbjL subfamily.

The protein localises to the cell membrane. The sequence is that of Putative transport protein VSAL_I2029 from Aliivibrio salmonicida (strain LFI1238) (Vibrio salmonicida (strain LFI1238)).